A 156-amino-acid polypeptide reads, in one-letter code: Endoribonuclease YbeY (156 aa).

3 residues coordinate Zn(2+): H122, H126, and H132.

Belongs to the endoribonuclease YbeY family. It depends on Zn(2+) as a cofactor.

The protein localises to the cytoplasm. Single strand-specific metallo-endoribonuclease involved in late-stage 70S ribosome quality control and in maturation of the 3' terminus of the 16S rRNA. This chain is Endoribonuclease YbeY, found in Syntrophomonas wolfei subsp. wolfei (strain DSM 2245B / Goettingen).